Consider the following 479-residue polypeptide: Sulfate adenylyltransferase subunit 1 (479 aa).

The tr-type G domain maps to 25-239 (KSLLRFLTCG…EVLETVDIQR (215 aa)). The G1 stretch occupies residues 34–41 (GSVDDGKS). 34 to 41 (GSVDDGKS) contacts GTP. Positions 92–96 (GITID) are G2. Positions 113–116 (DTPG) are G3. Residues 113–117 (DTPGH) and 168–171 (NKMD) each bind GTP. The tract at residues 168–171 (NKMD) is G4. The interval 206 to 208 (SAL) is G5.

Belongs to the TRAFAC class translation factor GTPase superfamily. Classic translation factor GTPase family. CysN/NodQ subfamily. In terms of assembly, heterodimer composed of CysD, the smaller subunit, and CysN.

The catalysed reaction is sulfate + ATP + H(+) = adenosine 5'-phosphosulfate + diphosphate. It participates in sulfur metabolism; hydrogen sulfide biosynthesis; sulfite from sulfate: step 1/3. In terms of biological role, with CysD forms the ATP sulfurylase (ATPS) that catalyzes the adenylation of sulfate producing adenosine 5'-phosphosulfate (APS) and diphosphate, the first enzymatic step in sulfur assimilation pathway. APS synthesis involves the formation of a high-energy phosphoric-sulfuric acid anhydride bond driven by GTP hydrolysis by CysN coupled to ATP hydrolysis by CysD. This is Sulfate adenylyltransferase subunit 1 from Salmonella newport (strain SL254).